We begin with the raw amino-acid sequence, 394 residues long: 2-aminobenzenesulfonate 2,3-dioxygenase subunit alpha (394 aa).

The region spanning 43-154 (WKFVCHVSEI…TETYLGLVFV (112 aa)) is the Rieske domain. Positions 85, 87, 105, and 108 each coordinate [2Fe-2S] cluster. Fe cation-binding residues include histidine 209 and histidine 213.

It belongs to the bacterial ring-hydroxylating dioxygenase alpha subunit family. As to quaternary structure, heterotetramer with a alpha2beta2 structure. Requires [2Fe-2S] cluster as cofactor. Fe cation is required as a cofactor.

The catalysed reaction is 2-aminobenzenesulfonate + NADH + O2 + 2 H(+) = 2,3-dihydroxybenzenesulfonate + NH4(+) + NAD(+). Its activity is regulated as follows. Inhibited by o-phenanthroline. Its function is as follows. Alpha subunit of the oxygenase component of the 2-aminobenzenesulfonate 2,3-dioxygenase system (deaminating) (ABSDOS). Can use 2-aminobenzenesulfonate (ABS), benzenesulfonate (BS), 4-toluenesulfonate (TS), 2-nitrobenzenesulfonate, 3- and 4-aminobenzenesulfonates, 4-chloro- and 4-hydroxybenzenesulfonates and pyridine-3-sulfonate as substrates. No desulfonation of ABS to aminocatechol or aminophenol detected. This chain is 2-aminobenzenesulfonate 2,3-dioxygenase subunit alpha, found in Alcaligenes sp.